Reading from the N-terminus, the 660-residue chain is Bifunctional polymyxin resistance protein ArnA (660 aa).

A formyltransferase ArnAFT region spans residues 1–304; that stretch reads MKTVVFAYHD…TLGLVQGSRL (304 aa). Residue 86–88 participates in (6R)-10-formyltetrahydrofolate binding; that stretch reads HLI. Residue H104 is the Proton donor; for formyltransferase activity of the active site. (6R)-10-formyltetrahydrofolate is bound by residues R114 and 136 to 140; that span reads VKRAD. The segment at 314–660 is dehydrogenase ArnADH; it reads RRTRVLILGV…RTVDLTDKPS (347 aa). NAD(+)-binding positions include D347 and 368-369; that span reads DI. Residues A393, Y398, and 432–433 each bind UDP-alpha-D-glucuronate; that span reads TS. The Proton acceptor; for decarboxylase activity role is filled by E434. Residues R460, N492, 526–535, and Y613 each bind UDP-alpha-D-glucuronate; that span reads KLIDGGKQKR. R619 acts as the Proton donor; for decarboxylase activity in catalysis.

This sequence in the N-terminal section; belongs to the Fmt family. UDP-L-Ara4N formyltransferase subfamily. In the C-terminal section; belongs to the NAD(P)-dependent epimerase/dehydratase family. UDP-glucuronic acid decarboxylase subfamily. In terms of assembly, homohexamer, formed by a dimer of trimers.

The enzyme catalyses UDP-alpha-D-glucuronate + NAD(+) = UDP-beta-L-threo-pentopyranos-4-ulose + CO2 + NADH. It carries out the reaction UDP-4-amino-4-deoxy-beta-L-arabinose + (6R)-10-formyltetrahydrofolate = UDP-4-deoxy-4-formamido-beta-L-arabinose + (6S)-5,6,7,8-tetrahydrofolate + H(+). It participates in nucleotide-sugar biosynthesis; UDP-4-deoxy-4-formamido-beta-L-arabinose biosynthesis; UDP-4-deoxy-4-formamido-beta-L-arabinose from UDP-alpha-D-glucuronate: step 1/3. It functions in the pathway nucleotide-sugar biosynthesis; UDP-4-deoxy-4-formamido-beta-L-arabinose biosynthesis; UDP-4-deoxy-4-formamido-beta-L-arabinose from UDP-alpha-D-glucuronate: step 3/3. The protein operates within bacterial outer membrane biogenesis; lipopolysaccharide biosynthesis. Functionally, bifunctional enzyme that catalyzes the oxidative decarboxylation of UDP-glucuronic acid (UDP-GlcUA) to UDP-4-keto-arabinose (UDP-Ara4O) and the addition of a formyl group to UDP-4-amino-4-deoxy-L-arabinose (UDP-L-Ara4N) to form UDP-L-4-formamido-arabinose (UDP-L-Ara4FN). The modified arabinose is attached to lipid A and is required for resistance to polymyxin and cationic antimicrobial peptides. The sequence is that of Bifunctional polymyxin resistance protein ArnA from Escherichia coli (strain K12 / MC4100 / BW2952).